The following is a 384-amino-acid chain: Acetylornithine aminotransferase (384 aa).

Residues 95–96 and Phe-122 each bind pyridoxal 5'-phosphate; that span reads GA. Residue Arg-125 coordinates N(2)-acetyl-L-ornithine. 207-210 is a pyridoxal 5'-phosphate binding site; the sequence is DEIQ. Lys-236 is subject to N6-(pyridoxal phosphate)lysine. Ser-264 lines the N(2)-acetyl-L-ornithine pocket. A pyridoxal 5'-phosphate-binding site is contributed by Thr-265.

It belongs to the class-III pyridoxal-phosphate-dependent aminotransferase family. ArgD subfamily. Homodimer. Requires pyridoxal 5'-phosphate as cofactor.

It is found in the cytoplasm. It carries out the reaction N(2)-acetyl-L-ornithine + 2-oxoglutarate = N-acetyl-L-glutamate 5-semialdehyde + L-glutamate. It functions in the pathway amino-acid biosynthesis; L-arginine biosynthesis; N(2)-acetyl-L-ornithine from L-glutamate: step 4/4. This is Acetylornithine aminotransferase from Halalkalibacterium halodurans (strain ATCC BAA-125 / DSM 18197 / FERM 7344 / JCM 9153 / C-125) (Bacillus halodurans).